An 836-amino-acid polypeptide reads, in one-letter code: Taste receptor type 1 member 2 (836 aa).

The first 19 residues, 1–19, serve as a signal peptide directing secretion; sequence MGPRAKAVCSLFILLQVLA. At 20-565 the chain is on the extracellular side; sequence EPAENSDFYL…AFLEWHEPST (546 aa). N-linked (GlcNAc...) asparagine glycans are attached at residues asparagine 84, asparagine 292, asparagine 312, asparagine 351, asparagine 427, asparagine 479, asparagine 486, asparagine 526, and asparagine 546. A helical transmembrane segment spans residues 566–586; the sequence is IFVVMLTILGFLSTLAIMVIF. Residues 587–601 are Cytoplasmic-facing; that stretch reads WRHLHTPVVRSAGGP. The helical transmembrane segment at 602 to 622 threads the bilayer; that stretch reads MCFLMLVPLLLAYAMVPMYIG. Residues 623-634 lie on the Extracellular side of the membrane; sequence QPTFFSCLWRQT. A helical membrane pass occupies residues 635–655; that stretch reads FFTLCFTICISCITVRSFQIV. Residues 656-680 lie on the Cytoplasmic side of the membrane; that stretch reads CIFKMARRLPRAYGYWVRCHGPYVF. The chain crosses the membrane as a helical span at residues 681-701; the sequence is VASFMVLKVVIVAGNVLATTA. The Extracellular segment spans residues 702–724; the sequence is NPTARPDPDDPNIMVLSCNYRRA. A helical transmembrane segment spans residues 725-745; the sequence is LLFNTSLDLLLSVAGFSFAYM. The Cytoplasmic portion of the chain corresponds to 746-757; the sequence is GKELPTNYNEAK. A helical transmembrane segment spans residues 758–778; sequence FITLCMTFYFTSSVSLCTFMS. Topologically, residues 779-781 are extracellular; the sequence is VYD. Residues 782–802 traverse the membrane as a helical segment; it reads GVLVTILDLLITVLNLLGISF. At 803–836 the chain is on the cytoplasmic side; it reads GYFGPKCYMVLFYPERNTQVYFSSMIQGYTMGKD.

Belongs to the G-protein coupled receptor 3 family. TAS1R subfamily. Forms heterodimers with TAS1R3.

It localises to the cell membrane. Its function is as follows. Putative taste receptor. TAS1R2/TAS1R3 recognizes diverse natural and synthetic sweeteners. The chain is Taste receptor type 1 member 2 (TAS1R2) from Canis lupus familiaris (Dog).